The following is a 442-amino-acid chain: FBD-associated F-box protein At1g66310 (442 aa).

In terms of domain architecture, F-box spans 18–64 (VDWLRDLPESLLCHILLNLPTKDVVKTSVLSSKWRNLWRLVPGLDLD). In terms of domain architecture, FBD spans 363–415 (KRRTSVLSGPRRLLSSLEYVEIESPLTGEVFEMKLVSYLLENSPILKKLTINL).

The polypeptide is FBD-associated F-box protein At1g66310 (Arabidopsis thaliana (Mouse-ear cress)).